Reading from the N-terminus, the 129-residue chain is Small ribosomal subunit protein uS11 (129 aa).

This sequence belongs to the universal ribosomal protein uS11 family. Part of the 30S ribosomal subunit. Interacts with proteins S7 and S18. Binds to IF-3.

Its function is as follows. Located on the platform of the 30S subunit, it bridges several disparate RNA helices of the 16S rRNA. Forms part of the Shine-Dalgarno cleft in the 70S ribosome. The protein is Small ribosomal subunit protein uS11 of Anoxybacillus flavithermus (strain DSM 21510 / WK1).